Here is a 248-residue protein sequence, read N- to C-terminus: Probable succinyl-CoA:3-ketoacid coenzyme A transferase subunit A (248 aa).

24–30 is a CoA binding site; that stretch reads GGFGLCG.

Belongs to the 3-oxoacid CoA-transferase subunit A family. As to quaternary structure, heterodimer of a subunit A and a subunit B.

It catalyses the reaction a 3-oxo acid + succinyl-CoA = a 3-oxoacyl-CoA + succinate. The sequence is that of Probable succinyl-CoA:3-ketoacid coenzyme A transferase subunit A (scoA) from Mycobacterium bovis (strain ATCC BAA-935 / AF2122/97).